The following is a 171-amino-acid chain: N5-carboxyaminoimidazole ribonucleotide mutase (171 aa).

Positions 10, 13, and 40 each coordinate substrate.

This sequence belongs to the AIR carboxylase family. Class I subfamily.

The catalysed reaction is 5-carboxyamino-1-(5-phospho-D-ribosyl)imidazole + H(+) = 5-amino-1-(5-phospho-D-ribosyl)imidazole-4-carboxylate. It participates in purine metabolism; IMP biosynthesis via de novo pathway; 5-amino-1-(5-phospho-D-ribosyl)imidazole-4-carboxylate from 5-amino-1-(5-phospho-D-ribosyl)imidazole (N5-CAIR route): step 2/2. Functionally, catalyzes the conversion of N5-carboxyaminoimidazole ribonucleotide (N5-CAIR) to 4-carboxy-5-aminoimidazole ribonucleotide (CAIR). This chain is N5-carboxyaminoimidazole ribonucleotide mutase, found in Thermotoga maritima (strain ATCC 43589 / DSM 3109 / JCM 10099 / NBRC 100826 / MSB8).